Reading from the N-terminus, the 499-residue chain is Serine/threonine-protein phosphatase 5 (499 aa).

The interval 1 to 24 (MAMAEGERTECAETPRDEPPADGT) is disordered. Ala2 bears the N-acetylalanine mark. 3 TPR repeats span residues 28–61 (AEEL…NPGN), 62–95 (AIYY…DKKY), and 96–129 (IKGY…KPND). The catalytic stretch occupies residues 184 to 499 (GKVTITFMKD…ANTLLQLGMM (316 aa)). 3 residues coordinate Mn(2+): Asp242, His244, and Asp271. Residue His244 participates in substrate binding. Residues Arg275 and 303 to 304 (NH) each bind substrate. Asn303 contributes to the Mn(2+) binding site. The active-site Proton donor/acceptor is His304. Residue His352 coordinates Mn(2+). Substrate-binding residues include Arg400 and His427. His427 contacts Mn(2+). The required for autoinhibition stretch occupies residues 495 to 499 (QLGMM).

The protein belongs to the PPP phosphatase family. PP-5 (PP-T) subfamily. Probably forms a complex composed of chaperones HSP90 and HSP70, co-chaperones STIP1/HOP, CDC37, PPP5C, PTGES3/p23, TSC1 and client protein TSC2. Probably forms a complex composed of chaperones HSP90 and HSP70, co-chaperones CDC37, PPP5C, TSC1 and client protein TSC2, CDK4, AKT, RAF1 and NR3C1; this complex does not contain co-chaperones STIP1/HOP and PTGES3/p23. Part of a complex with HSP90/HSP90AA1 and steroid receptors. Interacts (via TPR repeats) with HSP90AA1 (via TPR repeat-binding motif) or HSPA1A/HSPA1B; the interaction is direct and activates the phosphatase activity. Dissociates from HSPA1A/HSPA1B and HSP90AA1 in response to arachidonic acid. Interacts with CPNE1 (via VWFA domain). Interacts with CDC16, CDC27. Interacts with KLHDC10 (via the 6 Kelch repeats); inhibits the phosphatase activity on MAP3K5. Interacts with ATM and ATR; both interactions are induced by DNA damage and enhance ATM and ATR kinase activity. Interacts with RAD17; reduced by DNA damage. Interacts with nuclear receptors such as NR3C1/GCR and PPARG (activated by agonist); regulates their transactivation activities. Interacts (via TPR repeats) with S100 proteins S100A1, S100A2, S100A6, S100B and S100P; the interactions are calcium-dependent, strongly activate PPP5C phosphatase activity and compete with HSP90AA1 and MAP3K5 interactions. Interacts with SMAD2 and SMAD3 but not with SMAD1; decreases SMAD3 phosphorylation and protein levels. Interacts (via TPR repeats) with CRY1 and CRY2; the interaction with CRY2 down-regulates the phosphatase activity on CSNK1E. Interacts (via TPR repeats) with the active form of RAC1, GNA12 or GNA13; these interactions activate the phosphatase activity and translocate PPP5C to the cell membrane. Interacts with FLCN. Mg(2+) is required as a cofactor. It depends on Mn(2+) as a cofactor. Activated by at least two different proteolytic cleavages producing a 56 kDa and a 50 kDa form. As to expression, expressed in liver (at protein level) and brain, enriched in suprachiasmatic nuclei.

The protein localises to the nucleus. It is found in the cytoplasm. Its subcellular location is the cell membrane. It catalyses the reaction O-phospho-L-seryl-[protein] + H2O = L-seryl-[protein] + phosphate. The catalysed reaction is O-phospho-L-threonyl-[protein] + H2O = L-threonyl-[protein] + phosphate. Autoinhibited. In the autoinhibited state, the TPR domain interacts with the catalytic region and prevents substrate access to the catalytic pocket. Allosterically activated by various polyunsaturated fatty acids, free long-chain fatty-acids and long-chain fatty acyl-CoA esters, arachidonic acid being the most effective activator. HSP90A and probably RAC1, GNA12 and GNA13 can also release the autoinhibition by the TPR repeat. Activation by RAC1, GNA12 and GNA13 is synergistic with the one produced by fatty acids binding. Inhibited by okadaic acid. Its function is as follows. Serine/threonine-protein phosphatase that dephosphorylates a myriad of proteins involved in different signaling pathways including the kinases CSNK1E, ASK1/MAP3K5, PRKDC and RAF1, the nuclear receptors NR3C1, PPARG, ESR1 and ESR2, SMAD proteins and TAU/MAPT. Implicated in wide ranging cellular processes, including apoptosis, differentiation, DNA damage response, cell survival, regulation of ion channels or circadian rhythms, in response to steroid and thyroid hormones, calcium, fatty acids, TGF-beta as well as oxidative and genotoxic stresses. Participates in the control of DNA damage response mechanisms such as checkpoint activation and DNA damage repair through, for instance, the regulation ATM/ATR-signaling and dephosphorylation of PRKDC and TP53BP1. Inhibits ASK1/MAP3K5-mediated apoptosis induced by oxidative stress. Plays a positive role in adipogenesis, mainly through the dephosphorylation and activation of PPARG transactivation function. Also dephosphorylates and inhibits the anti-adipogenic effect of NR3C1. Regulates the circadian rhythms, through the dephosphorylation and activation of CSNK1E. May modulate TGF-beta signaling pathway by the regulation of SMAD3 phosphorylation and protein expression levels. Dephosphorylates and may play a role in the regulation of TAU/MAPT. Through their dephosphorylation, may play a role in the regulation of ions channels such as KCNH2. Dephosphorylate FNIP1, disrupting interaction with HSP90AA1/Hsp90. The polypeptide is Serine/threonine-protein phosphatase 5 (Ppp5c) (Mus musculus (Mouse)).